The following is a 120-amino-acid chain: Flagellar protein FliT (120 aa).

The required for homodimerization stretch occupies residues 1-50 (MERHQHLLSEYQQILTLSEQMLMLATVENWDALVDLEMAYLKAVENTANI). The segment at 60–98 (LQELLRQKLRSILENEIEIKRLLQRRLDKLSELVGQSTR) is fliD binding.

The protein belongs to the FliT family. Homodimer. Interacts with FliD and FlhC.

The protein localises to the cytoplasm. Its subcellular location is the cytosol. In terms of biological role, dual-function protein that regulates the transcription of class 2 flagellar operons and that also acts as an export chaperone for the filament-capping protein FliD. As a transcriptional regulator, acts as an anti-FlhDC factor; it directly binds FlhC, thus inhibiting the binding of the FlhC/FlhD complex to class 2 promoters, resulting in decreased expression of class 2 flagellar operons. As a chaperone, effects FliD transition to the membrane by preventing its premature polymerization, and by directing it to the export apparatus. The protein is Flagellar protein FliT of Yersinia pseudotuberculosis serotype IB (strain PB1/+).